The following is a 363-amino-acid chain: GDP-fucose transporter 1 (363 aa).

8 helical membrane-spanning segments follow: residues 33–55, 75–97, 110–129, 139–161, 166–184, 194–213, 226–248, and 263–285; these read FLLRALQIALVVSLYWVTSISMV, VTFYQCLVTSLLCKGLSTLATCC, LKVARSVLPLSVVFIGMITF, VPFYNVGRSLTTVFNVLLSYLLL, SFYALLTCGVIIGGFWLGI, SLTGTIFGVLASLCVSLNAI, IWRLTFYNNVNACVLFLPLMIVL, and AHFWLMMTLGGLFGFAIGYVTGL.

This sequence belongs to the TPT transporter family. SLC35C subfamily.

The protein resides in the golgi apparatus membrane. The catalysed reaction is GMP(out) + GDP-beta-L-fucose(in) = GMP(in) + GDP-beta-L-fucose(out). Functionally, antiporter specific for GDP-l-fucose and depending on the concomitant reverse transport of GMP. Involved in GDP-fucose import from the cytoplasm into the Golgi lumen. The protein is GDP-fucose transporter 1 (Slc35c1) of Mus musculus (Mouse).